We begin with the raw amino-acid sequence, 263 residues long: Shikimate dehydrogenase (NADP(+)) (263 aa).

Residues 14-16 (SLS) and Thr-60 contribute to the shikimate site. Residue Lys-64 is the Proton acceptor of the active site. Positions 85 and 100 each coordinate shikimate. NADP(+) contacts are provided by residues 123–127 (GAGGA), 146–151 (NRTPQR), and Leu-205. Tyr-207 is a shikimate binding site. An NADP(+)-binding site is contributed by Gly-228.

Belongs to the shikimate dehydrogenase family. In terms of assembly, homodimer.

It carries out the reaction shikimate + NADP(+) = 3-dehydroshikimate + NADPH + H(+). It participates in metabolic intermediate biosynthesis; chorismate biosynthesis; chorismate from D-erythrose 4-phosphate and phosphoenolpyruvate: step 4/7. In terms of biological role, involved in the biosynthesis of the chorismate, which leads to the biosynthesis of aromatic amino acids. Catalyzes the reversible NADPH linked reduction of 3-dehydroshikimate (DHSA) to yield shikimate (SA). This chain is Shikimate dehydrogenase (NADP(+)), found in Thermus thermophilus (strain ATCC BAA-163 / DSM 7039 / HB27).